Reading from the N-terminus, the 414-residue chain is Tryptophan synthase beta chain (414 aa).

Lys-108 carries the post-translational modification N6-(pyridoxal phosphate)lysine.

This sequence belongs to the TrpB family. In terms of assembly, tetramer of two alpha and two beta chains. Pyridoxal 5'-phosphate serves as cofactor.

The enzyme catalyses (1S,2R)-1-C-(indol-3-yl)glycerol 3-phosphate + L-serine = D-glyceraldehyde 3-phosphate + L-tryptophan + H2O. It functions in the pathway amino-acid biosynthesis; L-tryptophan biosynthesis; L-tryptophan from chorismate: step 5/5. Functionally, the beta subunit is responsible for the synthesis of L-tryptophan from indole and L-serine. This Beijerinckia indica subsp. indica (strain ATCC 9039 / DSM 1715 / NCIMB 8712) protein is Tryptophan synthase beta chain.